The following is a 269-amino-acid chain: Bifunctional protein FolD (269 aa).

NADP(+) contacts are provided by residues 149–151 (GLG) and V215.

The protein belongs to the tetrahydrofolate dehydrogenase/cyclohydrolase family. Homodimer.

The enzyme catalyses (6R)-5,10-methylene-5,6,7,8-tetrahydrofolate + NADP(+) = (6R)-5,10-methenyltetrahydrofolate + NADPH. It catalyses the reaction (6R)-5,10-methenyltetrahydrofolate + H2O = (6R)-10-formyltetrahydrofolate + H(+). It participates in one-carbon metabolism; tetrahydrofolate interconversion. Catalyzes the oxidation of 5,10-methylenetetrahydrofolate to 5,10-methenyltetrahydrofolate and then the hydrolysis of 5,10-methenyltetrahydrofolate to 10-formyltetrahydrofolate. This Mycoplasma pneumoniae (strain ATCC 29342 / M129 / Subtype 1) (Mycoplasmoides pneumoniae) protein is Bifunctional protein FolD.